We begin with the raw amino-acid sequence, 97 residues long: Large ribosomal subunit protein eL21 (97 aa).

The protein belongs to the eukaryotic ribosomal protein eL21 family.

This is Large ribosomal subunit protein eL21 (rpl21e) from Archaeoglobus fulgidus (strain ATCC 49558 / DSM 4304 / JCM 9628 / NBRC 100126 / VC-16).